A 165-amino-acid polypeptide reads, in one-letter code: Crossover junction endodeoxyribonuclease RuvC (165 aa).

Catalysis depends on residues D8, E69, and H141. Residues D8, E69, and H141 each contribute to the Mg(2+) site.

This sequence belongs to the RuvC family. Homodimer which binds Holliday junction (HJ) DNA. The HJ becomes 2-fold symmetrical on binding to RuvC with unstacked arms; it has a different conformation from HJ DNA in complex with RuvA. In the full resolvosome a probable DNA-RuvA(4)-RuvB(12)-RuvC(2) complex forms which resolves the HJ. Mg(2+) serves as cofactor.

Its subcellular location is the cytoplasm. The enzyme catalyses Endonucleolytic cleavage at a junction such as a reciprocal single-stranded crossover between two homologous DNA duplexes (Holliday junction).. In terms of biological role, the RuvA-RuvB-RuvC complex processes Holliday junction (HJ) DNA during genetic recombination and DNA repair. Endonuclease that resolves HJ intermediates. Cleaves cruciform DNA by making single-stranded nicks across the HJ at symmetrical positions within the homologous arms, yielding a 5'-phosphate and a 3'-hydroxyl group; requires a central core of homology in the junction. The consensus cleavage sequence is 5'-(A/T)TT(C/G)-3'. Cleavage occurs on the 3'-side of the TT dinucleotide at the point of strand exchange. HJ branch migration catalyzed by RuvA-RuvB allows RuvC to scan DNA until it finds its consensus sequence, where it cleaves and resolves the cruciform DNA. The chain is Crossover junction endodeoxyribonuclease RuvC from Wolbachia pipientis subsp. Culex pipiens (strain wPip).